Here is a 103-residue protein sequence, read N- to C-terminus: SOSS complex subunit C (103 aa).

This sequence belongs to the SOSS-C family. As to quaternary structure, belongs to the multiprotein complex Integrator. Component of the SOSS complex, composed of soss-b (soss-b1/nabp2 or soss-b2/nabp1), soss-a/ints3 and soss-c/inip.

It is found in the nucleus. Functionally, component of the SOSS complex, a multiprotein complex that functions downstream of the MRN complex to promote DNA repair and G2/M checkpoint. The SOSS complex associates with single-stranded DNA at DNA lesions and influences diverse endpoints in the cellular DNA damage response including cell-cycle checkpoint activation, recombinational repair and maintenance of genomic stability. Required for efficient homologous recombination-dependent repair of double-strand breaks (DSBs). This is SOSS complex subunit C (inip) from Danio rerio (Zebrafish).